The sequence spans 557 residues: Organic cation/carnitine transporter 2 (557 aa).

Over 1 to 20 (MRDYDEVTAFLGEWGPFQRL) the chain is Cytoplasmic. Residues 21–41 (IFFLLSASIIPNGFNGMSIVF) form a helical membrane-spanning segment. Topologically, residues 42–142 (LAGTPEHRCL…DLVCKDDWKA (101 aa)) are extracellular. Asparagine 57, asparagine 64, and asparagine 91 each carry an N-linked (GlcNAc...) asparagine glycan. A helical transmembrane segment spans residues 143-163 (PLTTSLFFVGVLMGSFISGQL). The Cytoplasmic segment spans residues 164 to 172 (SDRFGRKNV). A helical transmembrane segment spans residues 173 to 193 (LFLTMGMQTGFSFLQLFSVNF). At 194–197 (EMFT) the chain is on the extracellular side. The chain crosses the membrane as a helical span at residues 198–218 (VLFVLVGMGQISNYVAAFVLG). Residue 218-225 (GTEILSKS) coordinates ATP. Residues 219–232 (TEILSKSIRIIFAT) lie on the Cytoplasmic side of the membrane. A helical membrane pass occupies residues 233–253 (LGVCIFYAFGFMVLPLFAYFI). At 254–257 (RDWR) the chain is on the extracellular side. A helical membrane pass occupies residues 258–278 (MLLLALTVPGVLCGALWWFIP). At 279–341 (ESPRWLISQG…YDLVRTRNIR (63 aa)) the chain is on the cytoplasmic side. Residues 342-362 (IITIMSIILWLTISVGYFGLS) traverse the membrane as a helical segment. The Extracellular segment spans residues 363–373 (LDTPNLHGDIY). Residues 374-394 (VNCFLLAAVEVPAYVLAWLLL) form a helical membrane-spanning segment. Residues 395-406 (QHLPRRYSISAA) are Cytoplasmic-facing. Residues 407–427 (LFLGGSVLLFIQLVPSELFYL) traverse the membrane as a helical segment. Residues 428–430 (STA) lie on the Extracellular side of the membrane. The helical transmembrane segment at 431-451 (LVMVGKFGITSAYSMVYVYTA) threads the bilayer. The Cytoplasmic portion of the chain corresponds to 452 to 462 (ELYPTVVRNMG). Residues 463–483 (VGVSSTASRLGSILSPYFVYL) traverse the membrane as a helical segment. The Extracellular portion of the chain corresponds to 484-488 (GAYDR). Tyrosine 486 carries the post-translational modification Phosphotyrosine. Residues 489-509 (FLPYILMGSLTILTAILTLFF) traverse the membrane as a helical segment. Residues 510–557 (PESFGAPLPDTIDQMLRVKGIKQWQIQSQTRTQKDGGESPTVLKSTAF) are Cytoplasmic-facing. A disordered region spans residues 537–557 (SQTRTQKDGGESPTVLKSTAF). Position 548 is a phosphoserine (serine 548). Threonine 550 bears the Phosphothreonine mark.

This sequence belongs to the major facilitator (TC 2.A.1) superfamily. Organic cation transporter (TC 2.A.1.19) family. As to quaternary structure, interacts with PDZK1. As to expression, expressed in the proximal and distal tubules and in the glomeruli in the kidney, in the myocardium, valves, and arterioles in the heart, in the labyrinthine layer of the placenta, and in the cortex, hippocampus, and cerebellum in the brain. Expressed in Sertoli cells in testis.

It localises to the cell membrane. The protein resides in the apical cell membrane. It is found in the basal cell membrane. The catalysed reaction is (R)-carnitine(out) + Na(+)(out) = (R)-carnitine(in) + Na(+)(in). The enzyme catalyses O-acetyl-(R)-carnitine(out) + Na(+)(out) = O-acetyl-(R)-carnitine(in) + Na(+)(in). It catalyses the reaction O-propanoyl-(R)-carnitine(out) + Na(+)(out) = O-propanoyl-(R)-carnitine(in) + Na(+)(in). It carries out the reaction glycine betaine(out) + Na(+)(out) = glycine betaine(in) + Na(+)(in). The catalysed reaction is glycine betaine(out) + (R)-carnitine(in) = glycine betaine(in) + (R)-carnitine(out). The enzyme catalyses O-butanoyl-(R)-carnitine(out) + Na(+)(out) = O-butanoyl-(R)-carnitine(in) + Na(+)(in). It catalyses the reaction (S)-carnitine(out) + Na(+)(out) = (S)-carnitine(in) + Na(+)(in). It carries out the reaction an O-acyl-(R)-carnitine(out) + Na(+)(out) = an O-acyl-(R)-carnitine(in) + Na(+)(in). The catalysed reaction is L-glutamyl-L-arginyl-glycyl-L-methionyl-L-threonine(out) + Na(+)(out) = L-glutamyl-L-arginyl-glycyl-L-methionyl-L-threonine(in) + Na(+)(in). The enzyme catalyses N,N-dimethylglycine(out) + Na(+)(out) = N,N-dimethylglycine(in) + Na(+)(in). With respect to regulation, inhibited by emetine, quinidine and verapamil. The IC(50) of emetine is 4.2 uM. Not inhibited by valproic acid. Transport of (R)-carnitine is stimulated by cholesterol in the plasma membrane. Its function is as follows. Sodium-ion dependent, high affinity carnitine transporter. Involved in the active cellular uptake of carnitine. Transports one sodium ion with one molecule of carnitine. Also transports organic cations such as tetraethylammonium (TEA) without the involvement of sodium. Also relative uptake activity ratio of carnitine to TEA is 11.3. May also contribute to regulate the transport of organic compounds in testis across the blood-testis-barrier. The protein is Organic cation/carnitine transporter 2 (Slc22a5) of Rattus norvegicus (Rat).